A 54-amino-acid polypeptide reads, in one-letter code: Ovomucoid (54 aa).

The Kazal-like domain occupies 4–54 (VDCSEHPKPACTLEDRPLCGSDNKIYSNKCDFCNAVLESNGTLTLSHFGKC). 3 cysteine pairs are disulfide-bonded: Cys6-Cys36, Cys14-Cys33, and Cys22-Cys54. A glycan (N-linked (GlcNAc...) asparagine) is linked at Asn43.

The protein localises to the secreted. The sequence is that of Ovomucoid from Argusianus argus (Great argus).